Consider the following 450-residue polypeptide: Glucose-6-phosphate isomerase (450 aa).

Catalysis depends on Glu289, which acts as the Proton donor. Active-site residues include His310 and Lys424.

It belongs to the GPI family.

It localises to the cytoplasm. The catalysed reaction is alpha-D-glucose 6-phosphate = beta-D-fructose 6-phosphate. It participates in carbohydrate biosynthesis; gluconeogenesis. Its pathway is carbohydrate degradation; glycolysis; D-glyceraldehyde 3-phosphate and glycerone phosphate from D-glucose: step 2/4. In terms of biological role, catalyzes the reversible isomerization of glucose-6-phosphate to fructose-6-phosphate. This Leptospira biflexa serovar Patoc (strain Patoc 1 / Ames) protein is Glucose-6-phosphate isomerase.